We begin with the raw amino-acid sequence, 100 residues long: Small ribosomal subunit protein bS18 (100 aa).

The interval 1–23 (MTFIRKPAGQAKPQKYSTDAYGR) is disordered.

This sequence belongs to the bacterial ribosomal protein bS18 family. As to quaternary structure, part of the 30S ribosomal subunit. Forms a tight heterodimer with protein bS6.

In terms of biological role, binds as a heterodimer with protein bS6 to the central domain of the 16S rRNA, where it helps stabilize the platform of the 30S subunit. The sequence is that of Small ribosomal subunit protein bS18 from Endomicrobium trichonymphae.